The following is a 152-amino-acid chain: Large ribosomal subunit protein bL9 (152 aa).

Belongs to the bacterial ribosomal protein bL9 family.

Functionally, binds to the 23S rRNA. The polypeptide is Large ribosomal subunit protein bL9 (Rippkaea orientalis (strain PCC 8801 / RF-1) (Cyanothece sp. (strain PCC 8801))).